A 161-amino-acid polypeptide reads, in one-letter code: Xanthine-guanine phosphoribosyltransferase (161 aa).

Residues 41-42 and 95-103 contribute to the 5-phospho-alpha-D-ribose 1-diphosphate site; these read RG and DDLVDTGNT. Residue D96 participates in Mg(2+) binding. Residues D99 and I142 each coordinate guanine. Xanthine-binding residues include D99 and I142. Residues 99 to 103 and 141 to 142 each bind GMP; these read DTGNT and WI.

It belongs to the purine/pyrimidine phosphoribosyltransferase family. XGPT subfamily. As to quaternary structure, homotetramer. It depends on Mg(2+) as a cofactor.

The protein resides in the cell inner membrane. It carries out the reaction GMP + diphosphate = guanine + 5-phospho-alpha-D-ribose 1-diphosphate. The catalysed reaction is XMP + diphosphate = xanthine + 5-phospho-alpha-D-ribose 1-diphosphate. It catalyses the reaction IMP + diphosphate = hypoxanthine + 5-phospho-alpha-D-ribose 1-diphosphate. It functions in the pathway purine metabolism; GMP biosynthesis via salvage pathway; GMP from guanine: step 1/1. Its pathway is purine metabolism; XMP biosynthesis via salvage pathway; XMP from xanthine: step 1/1. Its function is as follows. Purine salvage pathway enzyme that catalyzes the transfer of the ribosyl-5-phosphate group from 5-phospho-alpha-D-ribose 1-diphosphate (PRPP) to the N9 position of the 6-oxopurines guanine and xanthine to form the corresponding ribonucleotides GMP (guanosine 5'-monophosphate) and XMP (xanthosine 5'-monophosphate), with the release of PPi. To a lesser extent, also acts on hypoxanthine. The polypeptide is Xanthine-guanine phosphoribosyltransferase (Idiomarina loihiensis (strain ATCC BAA-735 / DSM 15497 / L2-TR)).